A 194-amino-acid chain; its full sequence is tRNA (mnm(5)s(2)U34)-methyltransferase (194 aa).

S-adenosyl-L-methionine contacts are provided by His-33, Asp-34, Asp-52, Gln-54, Ser-79, and His-80.

It belongs to the methyltransferase superfamily. MnmM family. Homodimer.

The catalysed reaction is 5-aminomethyl-2-thiouridine(34) in tRNA + S-adenosyl-L-methionine = 5-methylaminomethyl-2-thiouridine(34) in tRNA + S-adenosyl-L-homocysteine + H(+). It functions in the pathway tRNA modification. In terms of biological role, involved in the biosynthesis of 5-methylaminomethyl-2-thiouridine (mnm(5)s(2)U) at the wobble position (U34) in tRNA. Catalyzes the transfer of a methyl group from S-adenosyl-L-methionine to nm(5)s(2)U34 to form mnm(5)s(2)U34. The sequence is that of tRNA (mnm(5)s(2)U34)-methyltransferase from Bacillus subtilis (strain 168).